We begin with the raw amino-acid sequence, 148 residues long: uncharacterized protein (148 aa).

The next 4 membrane-spanning stretches (helical) occupy residues 29–49, 61–81, 99–119, and 121–141; these read FSLV…AAKE, PIIL…PLVM, FIVF…NGFL, and ILVS…TLCI.

It is found in the cell membrane. This is an uncharacterized protein from Bacillus subtilis (strain 168).